We begin with the raw amino-acid sequence, 77 residues long: Pi/alpha-stichotoxin-Hmg5b (77 aa).

The signal sequence occupies residues 1 to 21 (MDYQRLLFLFAVAMVITTTVA). The propeptide occupies 22–34 (LPKDTALMDGQLQ). 3 disulfides stabilise this stretch: Cys-40-Cys-73, Cys-42-Cys-66, and Cys-56-Cys-74. Met-52 is modified (methionine sulfoxide; partial).

Belongs to the sea anemone type 3 (BDS) potassium channel toxin family. In terms of processing, toxin occurs in two forms in the mucus, Hmg 1b-2 which is not oxidized and Hmg 1b-2 MetOx which is oxidized at Met-52.

Its subcellular location is the secreted. The protein resides in the nematocyst. The non-oxidized toxin is remarkably non-selective with activity on many different ion channels. Weakly and reversibly inhibits rat and human homomeric ASIC1 (isoform ASIC1a) (IC(50)=4.8 uM, and IC(50)=14.6 uM), and ASIC3 (IC(50)=15.9 uM). Molecular modeling interaction with ASIC1a suggests that this peptide hinders the collapse of acidic pockets and stabilizes nonconducting channels state. It activates several potassium channels including Kv1.1/KCNA1, Kv1.2/KCNA2, and drosophila Shaker IR. It moderately to potently inhibits potassium channels including Kv1.3/KCNA3, Kv1.4/KCNA4, Kv1.5/KCNA5, Kv1.6/KCNA6, Kv2.1/KCNB1, Kv4.2/KCND2, Kv7.1/KCNQ1, Kv7.2/Kv7.3 (KCNQ2/KCNQ3), Kv7.4/KCNQ4, hERG/KCNH2, and C.elegans QKT1. On sodium channels, it moderately to potently inhibits Nav1.1/SCN1A, Nav1.2/SCN2A, Nav1.3/SCN3A, Nav1.4/SCN4A, Nav1.5/SCN5A, Nav1.6/SCN8A, Nav1.7/SCN9A, Nav1.8/SCN10A, and B.germanica BgNav. It also moderately to potently inhibits Cav3.1/CACNA1G, Cav3.2/CACNA1H, and Cav3.3/CACNA1I. Significant shifts in the voltage-current relationship are observed on Kv and Nav, depending on the channel isoform, whereas the toxin does not seem to modulate the voltage-sensor domains of Cav channels, acting mainly as a pore blocker. Does not activate nicotinic acetylcholine receptors (nAChR), but potentiates ACh-elicited current of human alpha-7/CHRNA7 nAChR. Is also able to bind T.californica muscle-type nAChRs. In vivo, causes an excitatory effect in mice behavior. Also shows antihyperalgesic and analgesic activity in the acid-induced muscle pain mice model, and weak anti-inflammatory effect in models of acute local inflammation. Its function is as follows. Forms an oxidized toxin derivative (Hmg 1b-2 MetOx). Able to bind T.californica muscle-type nAChRs (alpha-1-beta-1-delta-epsilon (CHRNA1-CHRNB1-CHRND-CHRNE)). The polypeptide is Pi/alpha-stichotoxin-Hmg5b (Heteractis magnifica (Magnificent sea anemone)).